Here is a 263-residue protein sequence, read N- to C-terminus: 3'-5' ssDNA/RNA exonuclease TatD (263 aa).

A divalent metal cation contacts are provided by Glu-91, His-127, and His-152.

It belongs to the metallo-dependent hydrolases superfamily. TatD-type hydrolase family. TatD subfamily. Monomer. Requires Mg(2+) as cofactor.

The protein resides in the cytoplasm. In terms of biological role, 3'-5' exonuclease that prefers single-stranded DNA and RNA. May play a role in the H(2)O(2)-induced DNA damage repair. In Cronobacter sakazakii (strain ATCC BAA-894) (Enterobacter sakazakii), this protein is 3'-5' ssDNA/RNA exonuclease TatD.